The chain runs to 314 residues: Methionyl-tRNA formyltransferase (314 aa).

110–113 (SLLP) contacts (6S)-5,6,7,8-tetrahydrofolate.

It belongs to the Fmt family.

The catalysed reaction is L-methionyl-tRNA(fMet) + (6R)-10-formyltetrahydrofolate = N-formyl-L-methionyl-tRNA(fMet) + (6S)-5,6,7,8-tetrahydrofolate + H(+). Its function is as follows. Attaches a formyl group to the free amino group of methionyl-tRNA(fMet). The formyl group appears to play a dual role in the initiator identity of N-formylmethionyl-tRNA by promoting its recognition by IF2 and preventing the misappropriation of this tRNA by the elongation apparatus. The polypeptide is Methionyl-tRNA formyltransferase (Bacillus cereus (strain ATCC 14579 / DSM 31 / CCUG 7414 / JCM 2152 / NBRC 15305 / NCIMB 9373 / NCTC 2599 / NRRL B-3711)).